The primary structure comprises 496 residues: L-arabinose isomerase (496 aa).

Mn(2+) is bound by residues E305, E330, H347, and H446.

The protein belongs to the arabinose isomerase family. Mn(2+) serves as cofactor.

It catalyses the reaction beta-L-arabinopyranose = L-ribulose. The protein operates within carbohydrate degradation; L-arabinose degradation via L-ribulose; D-xylulose 5-phosphate from L-arabinose (bacterial route): step 1/3. Catalyzes the conversion of L-arabinose to L-ribulose. In Bacillus subtilis (strain 168), this protein is L-arabinose isomerase.